Consider the following 385-residue polypeptide: Probable dual-specificity RNA methyltransferase RlmN (385 aa).

A disordered region spans residues 1-24; sequence MTATTAESGNLLPLVSGRSRPPRH. Glu-114 functions as the Proton acceptor in the catalytic mechanism. The 245-residue stretch at 120-364 folds into the Radical SAM core domain; the sequence is YPQRATVCVS…AATVRDTRGR (245 aa). A disulfide bridge connects residues Cys-127 and Cys-370. Residues Cys-134, Cys-138, and Cys-141 each coordinate [4Fe-4S] cluster. S-adenosyl-L-methionine contacts are provided by residues 194 to 195, Ser-228, 251 to 253, and Asn-327; these read GE and SLH. Residue Cys-370 is the S-methylcysteine intermediate of the active site.

It belongs to the radical SAM superfamily. RlmN family. [4Fe-4S] cluster serves as cofactor.

The protein resides in the cytoplasm. It catalyses the reaction adenosine(2503) in 23S rRNA + 2 reduced [2Fe-2S]-[ferredoxin] + 2 S-adenosyl-L-methionine = 2-methyladenosine(2503) in 23S rRNA + 5'-deoxyadenosine + L-methionine + 2 oxidized [2Fe-2S]-[ferredoxin] + S-adenosyl-L-homocysteine. The catalysed reaction is adenosine(37) in tRNA + 2 reduced [2Fe-2S]-[ferredoxin] + 2 S-adenosyl-L-methionine = 2-methyladenosine(37) in tRNA + 5'-deoxyadenosine + L-methionine + 2 oxidized [2Fe-2S]-[ferredoxin] + S-adenosyl-L-homocysteine. Functionally, specifically methylates position 2 of adenine 2503 in 23S rRNA and position 2 of adenine 37 in tRNAs. The sequence is that of Probable dual-specificity RNA methyltransferase RlmN from Parafrankia sp. (strain EAN1pec).